A 381-amino-acid chain; its full sequence is tRNA pseudouridine synthase D (381 aa).

Asp-81 functions as the Nucleophile in the catalytic mechanism. The TRUD domain occupies 160 to 335 (GMPNYFGSQR…TLGSRRFFWV (176 aa)).

It belongs to the pseudouridine synthase TruD family.

It catalyses the reaction uridine(13) in tRNA = pseudouridine(13) in tRNA. Responsible for synthesis of pseudouridine from uracil-13 in transfer RNAs. This chain is tRNA pseudouridine synthase D, found in Helicobacter pylori (strain HPAG1).